The following is a 313-amino-acid chain: Beta-ketoacyl-[acyl-carrier-protein] synthase III (313 aa).

Residues Cys-112 and His-238 contribute to the active site. The segment at 239–243 (QANIR) is ACP-binding. The active site involves Asn-268.

It belongs to the thiolase-like superfamily. FabH family. In terms of assembly, homodimer.

It localises to the cytoplasm. It carries out the reaction malonyl-[ACP] + acetyl-CoA + H(+) = 3-oxobutanoyl-[ACP] + CO2 + CoA. It participates in lipid metabolism; fatty acid biosynthesis. In terms of biological role, catalyzes the condensation reaction of fatty acid synthesis by the addition to an acyl acceptor of two carbons from malonyl-ACP. Catalyzes the first condensation reaction which initiates fatty acid synthesis and may therefore play a role in governing the total rate of fatty acid production. Possesses both acetoacetyl-ACP synthase and acetyl transacylase activities. Its substrate specificity determines the biosynthesis of branched-chain and/or straight-chain of fatty acids. This chain is Beta-ketoacyl-[acyl-carrier-protein] synthase III, found in Staphylococcus aureus (strain COL).